The chain runs to 382 residues: Galactokinase (382 aa).

Residue glutamate 34 to aspartate 37 coordinates substrate. Glycine 124–serine 130 serves as a coordination point for ATP. Positions 130 and 162 each coordinate Mg(2+). Aspartate 174 functions as the Proton acceptor in the catalytic mechanism. Position 223 (tyrosine 223) interacts with substrate.

The protein belongs to the GHMP kinase family. GalK subfamily.

Its subcellular location is the cytoplasm. The enzyme catalyses alpha-D-galactose + ATP = alpha-D-galactose 1-phosphate + ADP + H(+). Its pathway is carbohydrate metabolism; galactose metabolism. Its function is as follows. Catalyzes the transfer of the gamma-phosphate of ATP to D-galactose to form alpha-D-galactose-1-phosphate (Gal-1-P). The polypeptide is Galactokinase (Salmonella paratyphi C (strain RKS4594)).